Here is a 95-residue protein sequence, read N- to C-terminus: Small ribosomal subunit protein bS6 (95 aa).

The protein belongs to the bacterial ribosomal protein bS6 family.

Functionally, binds together with bS18 to 16S ribosomal RNA. This Clostridium acetobutylicum (strain ATCC 824 / DSM 792 / JCM 1419 / IAM 19013 / LMG 5710 / NBRC 13948 / NRRL B-527 / VKM B-1787 / 2291 / W) protein is Small ribosomal subunit protein bS6.